Here is a 521-residue protein sequence, read N- to C-terminus: Vascular endothelial zinc finger 1 (521 aa).

The segment at 74-96 adopts a C2H2-type 1 zinc-finger fold; it reads FVCTYCSKAFRDSYHLRRHESCH. Low complexity predominate over residues 140-155; it reads TTSSSGTNPSSSASTT. Positions 140–167 are disordered; that stretch reads TTSSSGTNPSSSASTTAMPVTQSVKKPS. 5 C2H2-type zinc fingers span residues 174–196, 202–224, 232–255, 261–283, and 287–308; these read HACE…KLSH, FECP…VRSH, YTCS…KHVH, FKCQ…MVRH, and VSCN…LKTH. Lysine 362 carries the N6-acetyllysine modification. 4 repeat units span residues 394 to 400, 445 to 451, 457 to 463, and 479 to 485. A 4 X 7 AA repeats of P-[LV]-T-[IL]-T-[ST]-P region spans residues 394–485; sequence PVTLTTPFSI…IAHPVTITSP (92 aa).

The protein belongs to the krueppel C2H2-type zinc-finger protein family. In terms of assembly, interacts with ARHGAP22. In terms of tissue distribution, ubiquitously expressed. Highest levels in skeletal muscle and kidney.

The protein localises to the nucleus. Functionally, possible transcription factor. Specifically binds to the CT/GC-rich region of the interleukin-3 promoter and mediates tax transactivation of IL-3. This chain is Vascular endothelial zinc finger 1 (VEZF1), found in Homo sapiens (Human).